Consider the following 328-residue polypeptide: Aryl-hydrocarbon-interacting protein-like 1 (328 aa).

The PPIase FKBP-type domain occupies 53 to 145 (KQVGHPMHII…DLDELQKEPQ (93 aa)). TPR repeat units lie at residues 178 to 211 (VPIL…LRNL), 230 to 263 (NTLI…HPGI), and 264 to 297 (VKAY…EPSM).

In terms of assembly, directly interacts with NUB1.

Its subcellular location is the cytoplasm. It is found in the nucleus. Functionally, may be important in protein trafficking and/or protein folding and stabilization. This Bos taurus (Bovine) protein is Aryl-hydrocarbon-interacting protein-like 1 (AIPL1).